A 491-amino-acid chain; its full sequence is Probable V-type proton ATPase subunit B 1 (491 aa).

Arg-380 is an ATP binding site.

Belongs to the ATPase alpha/beta chains family. In terms of assembly, V-ATPase is a heteromultimeric enzyme made up of two complexes: the ATP-hydrolytic V1 complex and the proton translocation V0 complex. The V1 complex consists of three catalytic AB heterodimers that form a heterohexamer, three peripheral stalks each consisting of EG heterodimers, one central rotor including subunits D and F, and the regulatory subunits C and H. The proton translocation complex V0 consists of the proton transport subunit a, a ring of proteolipid subunits c9c'', rotary subunit d, subunits e and f, and the accessory subunits vah-19/Ac45 and vah-20/PRR.

Non-catalytic subunit of the V1 complex of vacuolar(H+)-ATPase (V-ATPase), a multisubunit enzyme composed of a peripheral complex (V1) that hydrolyzes ATP and a membrane integral complex (V0) that translocates protons. V-ATPase is responsible for acidifying and maintaining the pH of intracellular compartments and in some cell types, is targeted to the plasma membrane, where it is responsible for acidifying the extracellular environment. Essential for the proper assembly and activity of V-ATPase. Required maternally for early embryogenesis and zygotically during morphogenesis. Specifically, involved in the clearance of apoptotic cell corpses in embryos. Also, during embryonic development, the V-ATPase is required to repress fusion of epidermal cells probably by negatively regulating eff-1-mediated cell fusion. In neurons, required for necrotic cell death by promoting intracellular acidification. Required for cell death induced by hypoxia. Required for acidification of synaptic vesicles and the release of neurotransmitters from adult neurons. In Caenorhabditis briggsae, this protein is Probable V-type proton ATPase subunit B 1.